A 460-amino-acid chain; its full sequence is Probable asparagine--tRNA ligase, mitochondrial (460 aa).

It belongs to the class-II aminoacyl-tRNA synthetase family.

It localises to the mitochondrion matrix. It carries out the reaction tRNA(Asn) + L-asparagine + ATP = L-asparaginyl-tRNA(Asn) + AMP + diphosphate + H(+). In Dictyostelium discoideum (Social amoeba), this protein is Probable asparagine--tRNA ligase, mitochondrial (asnS2).